Consider the following 501-residue polypeptide: Endonuclease domain-containing 1 protein (501 aa).

An N-terminal signal peptide occupies residues methionine 1–alanine 21. Lysine 408 carries the post-translational modification N6-acetyllysine.

The protein belongs to the DNA/RNA non-specific endonuclease family. As to quaternary structure, interacts with RNF26; this interaction is important to modulate innate immune signaling through the cGAS-STING pathway.

The protein resides in the secreted. Its function is as follows. May act as a DNase and a RNase. Plays a role in the modulation of innate immune signaling through the cGAS-STING pathway by interacting with RNF26. The sequence is that of Endonuclease domain-containing 1 protein (Endod1) from Mus musculus (Mouse).